The following is a 396-amino-acid chain: tRNA(Met) cytidine acetate ligase (396 aa).

ATP contacts are provided by residues 9–22 (IVEYNPFHNGHLHH), glycine 103, asparagine 154, and arginine 179.

Belongs to the TmcAL family.

It localises to the cytoplasm. The catalysed reaction is cytidine(34) in elongator tRNA(Met) + acetate + ATP = N(4)-acetylcytidine(34) in elongator tRNA(Met) + AMP + diphosphate. In terms of biological role, catalyzes the formation of N(4)-acetylcytidine (ac(4)C) at the wobble position of elongator tRNA(Met), using acetate and ATP as substrates. First activates an acetate ion to form acetyladenylate (Ac-AMP) and then transfers the acetyl group to tRNA to form ac(4)C34. The chain is tRNA(Met) cytidine acetate ligase from Fusobacterium nucleatum subsp. nucleatum (strain ATCC 25586 / DSM 15643 / BCRC 10681 / CIP 101130 / JCM 8532 / KCTC 2640 / LMG 13131 / VPI 4355).